Consider the following 557-residue polypeptide: NADP-dependent malic enzyme (557 aa).

Y91 serves as the catalytic Proton donor. R144 contributes to the NADP(+) binding site. K162 acts as the Proton acceptor in catalysis. A divalent metal cation-binding residues include E234, D235, and D258. NADP(+) contacts are provided by residues D258, 290–307 (GAGEAALGIANLIVMAME), and N397.

This sequence belongs to the malic enzymes family. In terms of assembly, homotetramer. Mg(2+) serves as cofactor. Mn(2+) is required as a cofactor.

The protein localises to the cytoplasm. The catalysed reaction is (S)-malate + NADP(+) = pyruvate + CO2 + NADPH. It catalyses the reaction oxaloacetate + H(+) = pyruvate + CO2. This Anas platyrhynchos (Mallard) protein is NADP-dependent malic enzyme (ME1).